A 224-amino-acid chain; its full sequence is Ribonuclease T (224 aa).

The Exonuclease domain occupies 20–194 (VVIDVETAGF…YDTERTAELF (175 aa)). Mg(2+)-binding residues include aspartate 23, glutamate 25, histidine 181, and aspartate 186. The active-site Proton donor/acceptor is histidine 181.

It belongs to the RNase T family. As to quaternary structure, homodimer. It depends on Mg(2+) as a cofactor.

Trims short 3' overhangs of a variety of RNA species, leaving a one or two nucleotide 3' overhang. Responsible for the end-turnover of tRNA: specifically removes the terminal AMP residue from uncharged tRNA (tRNA-C-C-A). Also appears to be involved in tRNA biosynthesis. In Shewanella putrefaciens (strain CN-32 / ATCC BAA-453), this protein is Ribonuclease T.